Consider the following 89-residue polypeptide: Small ribosomal subunit protein uS15 (89 aa).

Belongs to the universal ribosomal protein uS15 family. As to quaternary structure, part of the 30S ribosomal subunit. Forms a bridge to the 50S subunit in the 70S ribosome, contacting the 23S rRNA.

In terms of biological role, one of the primary rRNA binding proteins, it binds directly to 16S rRNA where it helps nucleate assembly of the platform of the 30S subunit by binding and bridging several RNA helices of the 16S rRNA. Its function is as follows. Forms an intersubunit bridge (bridge B4) with the 23S rRNA of the 50S subunit in the ribosome. In Chlorobaculum parvum (strain DSM 263 / NCIMB 8327) (Chlorobium vibrioforme subsp. thiosulfatophilum), this protein is Small ribosomal subunit protein uS15.